Here is a 274-residue protein sequence, read N- to C-terminus: 4-deoxy-L-threo-5-hexosulose-uronate ketol-isomerase (274 aa).

Zn(2+)-binding residues include H192, H194, E199, and H241.

This sequence belongs to the KduI family. The cofactor is Zn(2+).

The enzyme catalyses 5-dehydro-4-deoxy-D-glucuronate = 3-deoxy-D-glycero-2,5-hexodiulosonate. Its pathway is glycan metabolism; pectin degradation; 2-dehydro-3-deoxy-D-gluconate from pectin: step 4/5. In terms of biological role, catalyzes the isomerization of 5-dehydro-4-deoxy-D-glucuronate to 3-deoxy-D-glycero-2,5-hexodiulosonate. This chain is 4-deoxy-L-threo-5-hexosulose-uronate ketol-isomerase, found in Shigella boydii serotype 18 (strain CDC 3083-94 / BS512).